The following is a 527-amino-acid chain: AAA ATPase forming ring-shaped complexes (527 aa).

The segment covering 1 to 18 (MVTMSSPTDSSPSNSFSD) has biased composition (low complexity). The tract at residues 1 to 38 (MVTMSSPTDSSPSNSFSDFNREEQSRLSDEVRQLKRTN) is disordered. Residues 19–33 (FNREEQSRLSDEVRQ) show a composition bias toward basic and acidic residues. Residues 21–53 (REEQSRLSDEVRQLKRTNSDLGARNAKLAEMLK) are a coiled coil. Residue 257 to 262 (GCGKTL) participates in ATP binding. Residues 492–515 (DENQQSEDLPNTSNPDEWSRITGR) are disordered. A compositionally biased stretch (polar residues) spans 497-507 (SEDLPNTSNPD).

The protein belongs to the AAA ATPase family. As to quaternary structure, homohexamer. Assembles into a hexameric ring structure.

In Corynebacterium glutamicum (strain R), this protein is AAA ATPase forming ring-shaped complexes.